The following is a 65-amino-acid chain: Large ribosomal subunit protein bL35 (65 aa).

It belongs to the bacterial ribosomal protein bL35 family.

This chain is Large ribosomal subunit protein bL35, found in Synechococcus sp. (strain CC9605).